Consider the following 237-residue polypeptide: Ribonuclease PH (237 aa).

Phosphate is bound by residues arginine 86 and glycine 124–arginine 126.

It belongs to the RNase PH family. In terms of assembly, homohexameric ring arranged as a trimer of dimers.

The catalysed reaction is tRNA(n+1) + phosphate = tRNA(n) + a ribonucleoside 5'-diphosphate. Its function is as follows. Phosphorolytic 3'-5' exoribonuclease that plays an important role in tRNA 3'-end maturation. Removes nucleotide residues following the 3'-CCA terminus of tRNAs; can also add nucleotides to the ends of RNA molecules by using nucleoside diphosphates as substrates, but this may not be physiologically important. Probably plays a role in initiation of 16S rRNA degradation (leading to ribosome degradation) during starvation. This chain is Ribonuclease PH, found in Rhodopseudomonas palustris (strain HaA2).